The sequence spans 571 residues: Proline--tRNA ligase (571 aa).

It belongs to the class-II aminoacyl-tRNA synthetase family. ProS type 1 subfamily. Homodimer.

Its subcellular location is the cytoplasm. It carries out the reaction tRNA(Pro) + L-proline + ATP = L-prolyl-tRNA(Pro) + AMP + diphosphate. Catalyzes the attachment of proline to tRNA(Pro) in a two-step reaction: proline is first activated by ATP to form Pro-AMP and then transferred to the acceptor end of tRNA(Pro). As ProRS can inadvertently accommodate and process non-cognate amino acids such as alanine and cysteine, to avoid such errors it has two additional distinct editing activities against alanine. One activity is designated as 'pretransfer' editing and involves the tRNA(Pro)-independent hydrolysis of activated Ala-AMP. The other activity is designated 'posttransfer' editing and involves deacylation of mischarged Ala-tRNA(Pro). The misacylated Cys-tRNA(Pro) is not edited by ProRS. This is Proline--tRNA ligase from Pseudomonas putida (strain GB-1).